The chain runs to 193 residues: Probable DNA-directed RNA polymerase subunit delta (193 aa).

The region spanning 14-83 is the HTH HARE-type domain; that stretch reads LSMIEVARAI…GDNKWGLRSW (70 aa). Composition is skewed to acidic residues over residues 119-133 and 143-193; these read EDAI…EDEN and YDND…ETND. The disordered stretch occupies residues 119–193; the sequence is EDAIDYNDDD…DDDYEDETND (75 aa).

The protein belongs to the RpoE family. RNAP is composed of a core of 2 alpha, a beta and a beta' subunits. The core is associated with a delta subunit and one of several sigma factors.

Its function is as follows. Participates in both the initiation and recycling phases of transcription. In the presence of the delta subunit, RNAP displays an increased specificity of transcription, a decreased affinity for nucleic acids, and an increased efficiency of RNA synthesis because of enhanced recycling. This is Probable DNA-directed RNA polymerase subunit delta from Streptococcus thermophilus (strain CNRZ 1066).